A 322-amino-acid polypeptide reads, in one-letter code: Rhomboid-like protein 16, chloroplastic (322 aa).

The transit peptide at 1–52 (MHAIFCRRVAVGCSSPQLTKLVTKQASQSRHSLSHLLPFDLSSRFVPPYVVS) directs the protein to the chloroplast. Transmembrane regions (helical) follow at residues 110–130 (WING…AVFT), 166–186 (FSHV…YFGA), 201–221 (YFAG…LSVI), 238–258 (IGKL…MLLY), 265–285 (FGLM…LNII), and 295–315 (TLTS…WARI).

It belongs to the peptidase S54 family.

The protein localises to the plastid. It localises to the chloroplast membrane. Rhomboid-type serine protease that catalyzes intramembrane proteolysis. May cleave the plastid translocon component Tic40. The protein is Rhomboid-like protein 16, chloroplastic of Arabidopsis thaliana (Mouse-ear cress).